The primary structure comprises 141 residues: Large ribosomal subunit protein uL16 (141 aa).

This sequence belongs to the universal ribosomal protein uL16 family. As to quaternary structure, part of the 50S ribosomal subunit. Contacts the CTC protein (RL25).

Binds the 5S and 23S rRNAs and is also seen to make contacts with the A and P site tRNAs. Interacts with A site tRNA mimics, and is probably one of the key factors, along with a helix of the 23S rRNA, in positioning tRNA stems in the peptidyl-transferase center. This chain is Large ribosomal subunit protein uL16 (rplP), found in Deinococcus radiodurans (strain ATCC 13939 / DSM 20539 / JCM 16871 / CCUG 27074 / LMG 4051 / NBRC 15346 / NCIMB 9279 / VKM B-1422 / R1).